The following is a 238-amino-acid chain: Ribonuclease PH (238 aa).

Phosphate-binding positions include Arg86 and 124 to 126 (GTR).

Belongs to the RNase PH family. As to quaternary structure, homohexameric ring arranged as a trimer of dimers.

The catalysed reaction is tRNA(n+1) + phosphate = tRNA(n) + a ribonucleoside 5'-diphosphate. In terms of biological role, phosphorolytic 3'-5' exoribonuclease that plays an important role in tRNA 3'-end maturation. Removes nucleotide residues following the 3'-CCA terminus of tRNAs; can also add nucleotides to the ends of RNA molecules by using nucleoside diphosphates as substrates, but this may not be physiologically important. Probably plays a role in initiation of 16S rRNA degradation (leading to ribosome degradation) during starvation. This chain is Ribonuclease PH, found in Solibacter usitatus (strain Ellin6076).